The primary structure comprises 43 residues: Cytochrome b559 subunit beta (43 aa).

A helical transmembrane segment spans residues 18–34 (WLAIHGLAIPTVFFLGG). H22 is a heme binding site.

Belongs to the PsbE/PsbF family. In terms of assembly, heterodimer of an alpha subunit and a beta subunit. PSII is composed of 1 copy each of membrane proteins PsbA, PsbB, PsbC, PsbD, PsbE, PsbF, PsbH, PsbI, PsbJ, PsbK, PsbL, PsbM, PsbT, PsbX, PsbY, PsbZ, Psb30/Ycf12, at least 3 peripheral proteins of the oxygen-evolving complex and a large number of cofactors. It forms dimeric complexes. Heme b is required as a cofactor.

It is found in the plastid. The protein localises to the chloroplast thylakoid membrane. Functionally, this b-type cytochrome is tightly associated with the reaction center of photosystem II (PSII). PSII is a light-driven water:plastoquinone oxidoreductase that uses light energy to abstract electrons from H(2)O, generating O(2) and a proton gradient subsequently used for ATP formation. It consists of a core antenna complex that captures photons, and an electron transfer chain that converts photonic excitation into a charge separation. The polypeptide is Cytochrome b559 subunit beta (Trieres chinensis (Marine centric diatom)).